Here is a 125-residue protein sequence, read N- to C-terminus: Small ribosomal subunit protein bS6 (125 aa).

Residues 96 to 125 (ETGASSMMKTVEREEARKASQAEFAAANER) are disordered. The segment covering 105-115 (TVEREEARKAS) has biased composition (basic and acidic residues).

Belongs to the bacterial ribosomal protein bS6 family.

Binds together with bS18 to 16S ribosomal RNA. This Paracidovorax citrulli (strain AAC00-1) (Acidovorax citrulli) protein is Small ribosomal subunit protein bS6.